Consider the following 437-residue polypeptide: UDP-N-acetylmuramoylalanine--D-glutamate ligase (437 aa).

ATP is bound at residue 112–118; that stretch reads GSNGKST.

Belongs to the MurCDEF family.

Its subcellular location is the cytoplasm. It catalyses the reaction UDP-N-acetyl-alpha-D-muramoyl-L-alanine + D-glutamate + ATP = UDP-N-acetyl-alpha-D-muramoyl-L-alanyl-D-glutamate + ADP + phosphate + H(+). It participates in cell wall biogenesis; peptidoglycan biosynthesis. Its function is as follows. Cell wall formation. Catalyzes the addition of glutamate to the nucleotide precursor UDP-N-acetylmuramoyl-L-alanine (UMA). The protein is UDP-N-acetylmuramoylalanine--D-glutamate ligase of Haemophilus influenzae (strain 86-028NP).